A 936-amino-acid chain; its full sequence is Protocadherin alpha-5 (936 aa).

The signal sequence occupies residues 1 to 28; it reads MVYSRRGSLGSRLLLLWLLLAYWKAGSG. The Extracellular segment spans residues 29-696; the sequence is QLHYSIPEEA…GPEAALVDVN (668 aa). 6 consecutive Cadherin domains span residues 33–132, 156–241, 242–349, 350–454, 455–564, and 580–677; these read SIPE…PPRF, ASDL…APEF, DKSI…TPEM, AITT…APAF, AQPQ…APAL, and VPRS…APKA. A glycan (N-linked (GlcNAc...) asparagine) is linked at Asn264. Residue Asn547 is glycosylated (N-linked (GlcNAc...) asparagine). The helical transmembrane segment at 697 to 717 threads the bilayer; that stretch reads VYLIIAICAVSSLLVLTLLLY. Residues 718 to 936 lie on the Cytoplasmic side of the membrane; sequence TALRCSAQPT…GNSTTDNSDQ (219 aa). 2 disordered regions span residues 759 to 793 and 816 to 936; these read SGEAPPKTDLMAFSPSLPQGPTSTDNPRQPNPDWR and AGPG…NSDQ. PXXP repeat units follow at residues 773 to 776, 785 to 788, 818 to 821, 873 to 876, and 877 to 890; these read PSLP, PRQP, PGGP, KFII, and PGSPAIISIRQEPT. The tract at residues 773 to 890 is 5 X 4 AA repeats of P-X-X-P; it reads PSLPQGPTST…AIISIRQEPT (118 aa). Residues 774-786 are compositionally biased toward polar residues; the sequence is SLPQGPTSTDNPR. The span at 895-909 shows a compositional bias: basic and acidic residues; that stretch reads DKSDFITFGKKEETK.

The protein resides in the cell membrane. Functionally, potential calcium-dependent cell-adhesion protein. May be involved in the establishment and maintenance of specific neuronal connections in the brain. The protein is Protocadherin alpha-5 (PCDHA5) of Homo sapiens (Human).